A 174-amino-acid chain; its full sequence is Ferredoxin-2, mitochondrial (174 aa).

A mitochondrion-targeting transit peptide spans 1 to 43 (MAASMARGVSARVLLRAAGGSWGPRAGHAAVTSRTFGTTGERR). The interval 26-52 (AGHAAVTSRTFGTTGERRAGEEAADSP) is disordered. The 2Fe-2S ferredoxin-type domain occupies 59-161 (VNVVFVDRSG…GVEFALPKIT (103 aa)). Cys96, Cys102, Cys105, and Cys142 together coordinate [2Fe-2S] cluster.

It belongs to the adrenodoxin/putidaredoxin family. In terms of assembly, component of the mitochondrial core iron-sulfur cluster (ISC) complex composed of NFS1, LYRM4, NDUFAB1, ISCU, FXN, and FDX2; this complex is a heterohexamer containing two copies of each monomer. Form a heterodimer complex with NFS1. Interacts (in both their reduced and oxidized states) with the cysteine desulfurase (NFS1:LYRM4) complex; this interaction stimulates cysteine desulfurase activity, and serves as a reductant for Fe-S cluster assembly. It depends on [2Fe-2S] cluster as a cofactor.

It is found in the mitochondrion. Its subcellular location is the mitochondrion matrix. Its function is as follows. Electron donor, of the core iron-sulfur cluster (ISC) assembly complex, that acts to reduce the persulfide into sulfide during [2Fe-2S] clusters assembly on the scaffolding protein ISCU. The core iron-sulfur cluster (ISC) assembly complex is involved in the de novo synthesis of a [2Fe-2S] cluster, the first step of the mitochondrial iron-sulfur protein biogenesis. This process is initiated by the cysteine desulfurase complex (NFS1:LYRM4:NDUFAB1) that produces persulfide which is delivered on the scaffold protein ISCU in a FXN-dependent manner. Then this complex is stabilized by FDX2 which provides reducing equivalents to accomplish the [2Fe-2S] cluster assembly. Finally, the [2Fe-2S] cluster is transferred from ISCU to chaperone proteins, including HSCB, HSPA9 and GLRX5. Essential for coenzyme Q biosynthesis: together with FDXR, transfers the electrons required for the hydroxylation reaction performed by COQ6. The chain is Ferredoxin-2, mitochondrial from Mus musculus (Mouse).